Reading from the N-terminus, the 433-residue chain is MSTSGCSSEKSDFQDSTEGEEEEDTQSENLCMREYVVIRDYMAADATQLSLCFGDKVLLLSAVTQDWWWVKHNGICGYVPASYLHDALNDQEDTEVDDPWQDEEYYGSYKTLKLHLEMLSDVPRTTAYKEVILRNSSSLCGKHILDLGCGTGIISFFCAKLAQPEAVYAVEASEIAEQTRRLVKQNGISNLVHVIRQRAEELQLPTKVDILVSEWMGTCLLFEFMLESVLQARDRWLKEDGVMWPSTACIHLVPCSASKEYANKVLFWDNPYQLDFSLLKPLAAKEFFARPKPDYVLQPEDCLSEPCILLHLNLKTLQLAELERMNSDFTFFVHTDGLLHGFTAWFSVQFQNLEEQGQLELNTGPFSPLTHWKHTLFMLDEPLQVQKGDKISGSVVFQRNSVWRRHMSVTLSWVINGKLTMQNVSQQWQAILA.

The segment at 1-27 (MSTSGCSSEKSDFQDSTEGEEEEDTQS) is disordered. Over residues 15–26 (DSTEGEEEEDTQ) the composition is skewed to acidic residues. The 60-residue stretch at 30–89 (LCMREYVVIRDYMAADATQLSLCFGDKVLLLSAVTQDWWWVKHNGICGYVPASYLHDALN) folds into the SH3 domain. The SAM-dependent MTase PRMT-type domain occupies 102-416 (DEEYYGSYKT…MSVTLSWVIN (315 aa)). His-115, Arg-124, Gly-148, Glu-171, and Glu-200 together coordinate S-adenosyl-L-methionine. Residues Glu-214 and Glu-223 contribute to the active site.

It belongs to the class I-like SAM-binding methyltransferase superfamily. Protein arginine N-methyltransferase family. In terms of assembly, interacts with ctnnb1.

The protein localises to the cytoplasm. The protein resides in the nucleus. The enzyme catalyses L-arginyl-[protein] + 2 S-adenosyl-L-methionine = N(omega),N(omega)-dimethyl-L-arginyl-[protein] + 2 S-adenosyl-L-homocysteine + 2 H(+). Functionally, arginine methyltransferase that methylates the guanidino nitrogens of arginyl residues in proteins such as histones. Involved in growth regulation. Involved in embryonic dorsal development. The chain is Protein arginine N-methyltransferase 2 (prmt2) from Xenopus tropicalis (Western clawed frog).